The sequence spans 387 residues: MPHSIDMEDSSAIAERSKHAGLALEPEACFNLPQPTAEDRQDNWQTQYHSSEGAQGGSRKAQAADATTGNPTVDDASQQNGLLQQWVKQGYFMPAEHGSKAGNDVKHKYSPPKSDVWGVLVACTVITTWAALFYHSIFQIKLPSIEQLRSGNYNPSDFTSWPHVLLAFFSLEFLYTGLFITTHDAMHGTIAMRHRKLNDFLGSFAISLYAWFDYKMLHKKHWEHHNHTGKVGADPDFHRGNPSILPWFARFMMEYSSLWQFAKIAWWATGMQLLGAPFQNILMFMTAAPILSAFRLFYYGTYIPHHPEPGPASDKVEMDWTMSRTSTAPSLLSFLTCYHFDLHWEHHRWPYAPWWQLPVCRKLAGRTNPLHTEALQTAEPSRLEHGG.

A disordered region spans residues 1–78 (MPHSIDMEDS…GNPTVDDASQ (78 aa)). Polar residues-rich tracts occupy residues 43-53 (NWQTQYHSSEG) and 65-78 (DATTGNPTVDDASQ).

The enzyme catalyses echinenone + 2 AH2 + 2 O2 = canthaxanthin + 2 A + 3 H2O. The catalysed reaction is all-trans-beta-carotene + 2 AH2 + 2 O2 = echinenone + 2 A + 3 H2O. It functions in the pathway carotenoid biosynthesis. Functionally, involved in the biosynthesis of ketocarotenoids which are powerful anti-oxidative molecules. Catalyzes the conversion of beta-carotene to canthaxanthin via echinenone. The sequence is that of Beta-carotene 4-ketolase from Protosiphon botryoides (Green alga).